The chain runs to 125 residues: Large ribosomal subunit protein bL12 (125 aa).

The protein belongs to the bacterial ribosomal protein bL12 family. In terms of assembly, homodimer. Part of the ribosomal stalk of the 50S ribosomal subunit. Forms a multimeric L10(L12)X complex, where L10 forms an elongated spine to which 2 to 4 L12 dimers bind in a sequential fashion. Binds GTP-bound translation factors.

Forms part of the ribosomal stalk which helps the ribosome interact with GTP-bound translation factors. Is thus essential for accurate translation. This Delftia acidovorans (strain DSM 14801 / SPH-1) protein is Large ribosomal subunit protein bL12.